A 1564-amino-acid polypeptide reads, in one-letter code: MLQAPSSSNSGLNQGNAAPDGPPNETQPYEGLDAAAQEEIKELARTLTSQSSLLSQEKRITGTGDPNTLTAASSSSLSRSIFASDIKGVNPILLDVNDPDYDETLDPRSENFSSVRWVRNMAQICENDSDFYKPFSLGCAWKDLSASGDSADITYQGTFGNMPIKYLKMSWRCISRRLFHRTHGKSEDNDSGFQILKPMDGCINPGELLVVLGRPGAGCTTLLKSISVNTHGFKISPDTIITYNGFSNKEIKNHYRGEVVYNAESDIHIPHLTVFQTLYTVARLKTPRNRIKGVDRDTFAKHMTEVAMATYGLSHTADTKVGNDFVRGVSGGERKRVSIAEVSICGSKFQCWDNATRGLDSATALEFIKALKTQATITKSAATVAIYQCSKDAYDLFDKVCVLYDGYQIFFGPSKQAKKYFQRMGYVCPERQTTADYLTSITSPSERIKDKDMVKHGIMIPQTAYEMNQYWIQSEEYKQLQVQVNKHLDTDSSQQREQIKNAHIAKQSKRARPSSPYTVSFFLQVKYILIRDIWRIKNDPSIQLFTVLSHAAMALILGSMFYEVMLSTTTTTFYYRGAAIFFAILFNAFSSLLEIFSLYETRPITEKHKTYSLYRPSADAFASTFSDVPTKLATAVTFNIPYYFLINLKRDAGAFFFYFLINIITVFAMSHLFRCIGSVSKTLPQAMVPASVLLLAFAMYTGFAIPRVQMLGWSKWISYINPLSYLFESLMINEFHGRNFPCAQYIPSGPNYVNATGDEVTCSALGSIPGNNYVSGDDFIQTNYGYRHKNKWRSVGIGLAYIIFFLFLYLFFCEYNEGAKQNGEMLVFPHSVVKKMKKKGIVSEKKKKNQPTLSTSDAEKDVEMNNNSSATDSRFLRDSDAAIMGNDKTVAKEHYSSPSSSASQSNSFSKSDDIELSKSQAIFHWKNLCYDIPIKNGKRRILDNVDGWVKPGTLTALIGASGAGKTTLLDCLAERTTMGLITGDVFVDGRPRDQSFPRSIGYCQQQDLHLKTATVRESLRFSAYLRQADDVSIEEKDKYVEEVIEVLEMKLYADAIVGVPGEGLNVEQRKRLTIGVELAAKPKLLVFLDEPTSGLDSQTAWSTCQLMKKLASRGQAILCTIHQPSALLMQEFDRLLFLQEGGQTVYFGELGKGCKTMINYFEAHGAHKCPPDANPAEWMLEIVGAAPGTHASQDYFAIWRDSEEYREMQKELDWMERELPKRTEGSSNEEQKEFATSTLYQIKLVSYRLFHQYWRTPFYLWSKFFSTIVSELFIGFTFFKANTSLQGLQNQMLAIFMFTVVFNPILQQYLPLFVQQRELYEARERPSRTFSWKAFIVSQILVEIPWNLLAGTIAFFVYYYPVGFYRNASYANQLHERGALFWLFACAFYVYISSMGVLVISCIEIAENAANLASLFFIMSLSFCGVLATPNILPRFWIFMYRVSPLTYLIDALLSVGLANASVVCSSNELLKIVPPSGMTCSEYMEPYMQSTGTGYLLDGSSETECHFCQFSSTNDYLATVSSSYSRRWMNYGIFSAYIVFDYCAAIFLYWLVRVPKKSKKLKK.

Residues 1–16 (MLQAPSSSNSGLNQGN) show a composition bias toward polar residues. The segment at 1-37 (MLQAPSSSNSGLNQGNAAPDGPPNETQPYEGLDAAAQ) is disordered. The Cytoplasmic portion of the chain corresponds to 1 to 587 (MLQAPSSSNS…AAIFFAILFN (587 aa)). The ABC transporter 1 domain occupies 174 to 430 (ISRRLFHRTH…FQRMGYVCPE (257 aa)). A run of 5 helical transmembrane segments spans residues 588–608 (AFSSLLEIFSLYETRPITEKH), 624–644 (TFSDVPTKLATAVTFNIPYYF), 674–694 (RCIGSVSKTLPQAMVPASVLL), 699–719 (MYTGFAIPRVQMLGWSKWISY), and 732–752 (INEFHGRNFPCAQYIPSGPNY). Residue Asn754 is glycosylated (N-linked (GlcNAc...) asparagine). The segment covering 839–849 (KGIVSEKKKKN) has biased composition (basic residues). The disordered stretch occupies residues 839 to 872 (KGIVSEKKKKNQPTLSTSDAEKDVEMNNNSSATD). A helical transmembrane segment spans residues 841–861 (IVSEKKKKNQPTLSTSDAEKD). Residues 862–1304 (VEMNNNSSAT…IFMFTVVFNP (443 aa)) are Cytoplasmic-facing. Residues 923 to 1166 (FHWKNLCYDI…MINYFEAHGA (244 aa)) form the ABC transporter 2 domain. Residue 959–966 (GASGAGKT) coordinates ATP. Transmembrane regions (helical) follow at residues 1305-1325 (ILQQYLPLFVQQRELYEARER), 1340-1360 (ILVEIPWNLLAGTIAFFVYYY), 1390-1410 (VYISSMGVLVISCIEIAENAA), 1426-1446 (VLATPNILPRFWIFMYRVSPL), 1459-1479 (ANASVVCSSNELLKIVPPSGM), and 1491-1511 (STGTGYLLDGSSETECHFCQF). The Cytoplasmic portion of the chain corresponds to 1512–1564 (SSTNDYLATVSSSYSRRWMNYGIFSAYIVFDYCAAIFLYWLVRVPKKSKKLKK).

The protein belongs to the ABC transporter superfamily. ABCG family. PDR (TC 3.A.1.205) subfamily.

It is found in the membrane. This is ATP-dependent permease PDR10 (PDR10) from Saccharomyces cerevisiae (strain ATCC 204508 / S288c) (Baker's yeast).